The sequence spans 407 residues: Guanine nucleotide-binding protein alpha-1 subunit (407 aa).

A lipid anchor (N-myristoyl glycine) is attached at Gly-2. A lipid anchor (S-palmitoyl cysteine) is attached at Cys-3. The region spanning 73-407 is the G-alpha domain; sequence NDIKVLLLGA…MSNNLQSLMF (335 aa). Residues 76–89 are G1 motif; it reads KVLLLGAGDSGKTT. GTP contacts are provided by Asp-84, Ser-85, Gly-86, Lys-87, Thr-88, Thr-89, Asp-190, Leu-215, Thr-221, Gly-243, Asn-309, Lys-310, Asp-312, and Ala-380. Thr-88 is a binding site for Mg(2+). Positions 213 to 221 are G2 motif; it reads DILHCRIKT. Thr-221 contacts Mg(2+). A G3 motif region spans residues 236–245; it reads YRFFDVGGQR. Residues 305-312 are G4 motif; that stretch reads ILFLNKLD. Residues 378 to 383 form a G5 motif region; sequence TTATDT.

This sequence belongs to the G-alpha family. G(q) subfamily. As to quaternary structure, g proteins are composed of 3 units; alpha, beta and gamma. The alpha chain contains the guanine nucleotide binding site. Mg(2+) serves as cofactor.

In terms of biological role, implicated in the mating and sporulation pathway. Probably coupled to mating-factor receptors. May act in concert with Ras1. This chain is Guanine nucleotide-binding protein alpha-1 subunit (gpa1), found in Schizosaccharomyces pombe (strain 972 / ATCC 24843) (Fission yeast).